The chain runs to 380 residues: Histidinol-phosphate aminotransferase 1 (380 aa).

An N6-(pyridoxal phosphate)lysine modification is found at lysine 235.

It belongs to the class-II pyridoxal-phosphate-dependent aminotransferase family. Histidinol-phosphate aminotransferase subfamily. As to quaternary structure, homodimer. Pyridoxal 5'-phosphate is required as a cofactor.

It catalyses the reaction L-histidinol phosphate + 2-oxoglutarate = 3-(imidazol-4-yl)-2-oxopropyl phosphate + L-glutamate. It participates in amino-acid biosynthesis; L-histidine biosynthesis; L-histidine from 5-phospho-alpha-D-ribose 1-diphosphate: step 7/9. The polypeptide is Histidinol-phosphate aminotransferase 1 (Psychrobacter arcticus (strain DSM 17307 / VKM B-2377 / 273-4)).